Here is a 226-residue protein sequence, read N- to C-terminus: Uridylate kinase (226 aa).

6 to 10 (KISGK) lines the ATP pocket. Gly-43 contacts UMP. Gly-44 and Arg-48 together coordinate ATP. UMP-binding positions include Asp-65 and 113 to 119 (FQPGQST). Thr-139, Asn-140, Tyr-145, and Asp-148 together coordinate ATP.

It belongs to the UMP kinase family. As to quaternary structure, homohexamer.

Its subcellular location is the cytoplasm. It carries out the reaction UMP + ATP = UDP + ADP. Its pathway is pyrimidine metabolism; CTP biosynthesis via de novo pathway; UDP from UMP (UMPK route): step 1/1. Its activity is regulated as follows. Inhibited by UTP. Functionally, catalyzes the reversible phosphorylation of UMP to UDP. The chain is Uridylate kinase from Saccharolobus islandicus (strain M.16.27) (Sulfolobus islandicus).